The sequence spans 427 residues: Peptidase B (427 aa).

Mn(2+)-binding residues include lysine 195 and aspartate 200. Lysine 207 is a catalytic residue. Mn(2+) contacts are provided by aspartate 218, aspartate 277, and glutamate 279. Residue arginine 281 is part of the active site.

It belongs to the peptidase M17 family. In terms of assembly, homohexamer. Requires Mn(2+) as cofactor.

It localises to the cytoplasm. The enzyme catalyses Release of an N-terminal amino acid, Xaa, from a peptide or arylamide. Xaa is preferably Glu or Asp but may be other amino acids, including Leu, Met, His, Cys and Gln.. Functionally, probably plays an important role in intracellular peptide degradation. The sequence is that of Peptidase B from Escherichia coli (strain SMS-3-5 / SECEC).